We begin with the raw amino-acid sequence, 231 residues long: MNRLLSVFALGGAVLLAGCVAPTPSPTTRTMRRCCRAPRCRQRPTTVRSTRPVSSRTCTATARRSGWVTSSPSRSMSATSASKNAGSQIAKTSKTDIGLTSLFGSTPNTNNPFGGGDLSLEAGYSGDRATKGDSKATQGNTLTGSITVTVAEVLPNGNHRRARQKWLTLNTGEELVRIAGMVRADDIATDNTVPSTRVADARITYSGTGSFADASQPGWLDRFFISPLWPF.

The first 18 residues, 1–18 (MNRLLSVFALGGAVLLAG), serve as a signal peptide directing secretion. Residue cysteine 19 is the site of N-palmitoyl cysteine attachment. Cysteine 19 carries the S-diacylglycerol cysteine lipid modification. Disordered stretches follow at residues 46-90 (TVRS…SQIA) and 103-140 (FGST…TQGN). The segment covering 47 to 62 (VRSTRPVSSRTCTATA) has biased composition (polar residues). A compositionally biased stretch (low complexity) spans 69–82 (TSSPSRSMSATSAS). Residues 103-112 (FGSTPNTNNP) show a composition bias toward polar residues.

It belongs to the FlgH family. The basal body constitutes a major portion of the flagellar organelle and consists of four rings (L,P,S, and M) mounted on a central rod.

The protein localises to the cell outer membrane. Its subcellular location is the bacterial flagellum basal body. Assembles around the rod to form the L-ring and probably protects the motor/basal body from shearing forces during rotation. This is Flagellar L-ring protein (flgH) from Pseudomonas putida (Arthrobacter siderocapsulatus).